A 425-amino-acid chain; its full sequence is Glucose-1-phosphate adenylyltransferase (425 aa).

Residues tyrosine 109, glycine 175, 190-191, and serine 208 contribute to the alpha-D-glucose 1-phosphate site; that span reads EK.

It belongs to the bacterial/plant glucose-1-phosphate adenylyltransferase family. In terms of assembly, homotetramer.

The enzyme catalyses alpha-D-glucose 1-phosphate + ATP + H(+) = ADP-alpha-D-glucose + diphosphate. It participates in glycan biosynthesis; glycogen biosynthesis. Involved in the biosynthesis of ADP-glucose, a building block required for the elongation reactions to produce glycogen. Catalyzes the reaction between ATP and alpha-D-glucose 1-phosphate (G1P) to produce pyrophosphate and ADP-Glc. This is Glucose-1-phosphate adenylyltransferase from Saccharophagus degradans (strain 2-40 / ATCC 43961 / DSM 17024).